The sequence spans 329 residues: DNA-directed RNA polymerase subunit alpha (329 aa).

Residues 1 to 233 are alpha N-terminal domain (alpha-NTD); it reads MVREKVKVST…NLFIPFLHVE (233 aa). The segment at 266-329 is alpha C-terminal domain (alpha-CTD); sequence TKELAFQYIF…KKILDILEKK (64 aa).

The protein belongs to the RNA polymerase alpha chain family. As to quaternary structure, in plastids the minimal PEP RNA polymerase catalytic core is composed of four subunits: alpha, beta, beta', and beta''. When a (nuclear-encoded) sigma factor is associated with the core the holoenzyme is formed, which can initiate transcription.

It is found in the plastid. Its subcellular location is the chloroplast. The enzyme catalyses RNA(n) + a ribonucleoside 5'-triphosphate = RNA(n+1) + diphosphate. Its function is as follows. DNA-dependent RNA polymerase catalyzes the transcription of DNA into RNA using the four ribonucleoside triphosphates as substrates. This Arabidopsis thaliana (Mouse-ear cress) protein is DNA-directed RNA polymerase subunit alpha.